Consider the following 486-residue polypeptide: NADH-quinone oxidoreductase subunit N (486 aa).

14 consecutive transmembrane segments (helical) span residues 14-34 (SIAP…LNFI), 45-65 (MLAI…SGIV), 77-97 (FAFI…PLTL), 105-125 (CSLA…EFMV), 130-150 (LIVI…LIAL), 163-183 (YFTM…IFYL), 203-223 (ILIA…LSLI), 237-257 (SEVM…IVAM), 268-288 (IAFI…LANI), 299-319 (MLAF…VIGT), 326-346 (LFLY…VLWF), 377-397 (FLMA…VFWG), 409-429 (GFIF…YYYL), and 459-479 (FIIT…KFWT).

Belongs to the complex I subunit 2 family. In terms of assembly, NDH-1 is composed of 14 different subunits. Subunits NuoA, H, J, K, L, M, N constitute the membrane sector of the complex.

The protein resides in the cell inner membrane. The enzyme catalyses a quinone + NADH + 5 H(+)(in) = a quinol + NAD(+) + 4 H(+)(out). NDH-1 shuttles electrons from NADH, via FMN and iron-sulfur (Fe-S) centers, to quinones in the respiratory chain. The immediate electron acceptor for the enzyme in this species is believed to be ubiquinone. Couples the redox reaction to proton translocation (for every two electrons transferred, four hydrogen ions are translocated across the cytoplasmic membrane), and thus conserves the redox energy in a proton gradient. The sequence is that of NADH-quinone oxidoreductase subunit N from Campylobacter hominis (strain ATCC BAA-381 / DSM 21671 / CCUG 45161 / LMG 19568 / NCTC 13146 / CH001A).